The following is a 710-amino-acid chain: DNA ligase (710 aa).

NAD(+) is bound by residues 53–57 (DAEYD), 102–103 (SL), and Glu-136. The active-site N6-AMP-lysine intermediate is Lys-138. Residues Arg-159, Glu-196, Lys-312, and Lys-336 each contribute to the NAD(+) site. Positions 429, 432, 453, and 459 each coordinate Zn(2+). In terms of domain architecture, BRCT spans 633 to 710 (ETSSPVAGKT…DEDQWIELAG (78 aa)).

This sequence belongs to the NAD-dependent DNA ligase family. LigA subfamily. The cofactor is Mg(2+). Requires Mn(2+) as cofactor.

It catalyses the reaction NAD(+) + (deoxyribonucleotide)n-3'-hydroxyl + 5'-phospho-(deoxyribonucleotide)m = (deoxyribonucleotide)n+m + AMP + beta-nicotinamide D-nucleotide.. DNA ligase that catalyzes the formation of phosphodiester linkages between 5'-phosphoryl and 3'-hydroxyl groups in double-stranded DNA using NAD as a coenzyme and as the energy source for the reaction. It is essential for DNA replication and repair of damaged DNA. This chain is DNA ligase, found in Parvibaculum lavamentivorans (strain DS-1 / DSM 13023 / NCIMB 13966).